A 367-amino-acid polypeptide reads, in one-letter code: Nociceptin receptor (367 aa).

The Extracellular portion of the chain corresponds to 1–45 (MESLFPAPFWEVLYGSHFQGNLSLLNETVPHHLLLNASHSAFLPL). Asn-21, Asn-26, and Asn-36 each carry an N-linked (GlcNAc...) asparagine glycan. Residues 46 to 71 (GLKVTIVGLYLAVCIGGLLGNCLVMY) form a helical membrane-spanning segment. Over 72–84 (VILRHTKMKTATN) the chain is Cytoplasmic. A helical transmembrane segment spans residues 85 to 106 (IYIFNLALADTLVLLTLPFQGT). Topologically, residues 107–121 (DILLGFWPFGNALCK) are extracellular. Cys-120 and Cys-197 are oxidised to a cystine. Residues 122-143 (TVIAIDYYNMFTSTFTLTAMSV) traverse the membrane as a helical segment. The Cytoplasmic portion of the chain corresponds to 144–162 (DRYVAICHPIRALDVRTSS). Residues 163-185 (KAQAVNVAIWALASVVGVPVAIM) traverse the membrane as a helical segment. Topologically, residues 186–208 (GSAQVEDEEIECLVEIPAPQDYW) are extracellular. Residues 209–233 (GPVFAICIFLFSFIIPVLIISVCYS) form a helical membrane-spanning segment. Over 234–261 (LMIRRLRGVRLLSGSREKDRNLRRITRL) the chain is Cytoplasmic. A helical transmembrane segment spans residues 262–282 (VLVVVAVFVGCWTPVQVFVLV). Topologically, residues 283 to 297 (QGLGVQPGSETAVAI) are extracellular. The chain crosses the membrane as a helical span at residues 298 to 319 (LRFCTALGYVNSCLNPILYAFL). The Cytoplasmic portion of the chain corresponds to 320–367 (DENFKACFRKFCCASALHREMQVSDRVRSIAKDVGLGCKTSETVPRPA). Cys-331 carries S-palmitoyl cysteine lipidation.

Belongs to the G-protein coupled receptor 1 family. Phosphorylation at Ser-360 requires GRK3. As to expression, in the brain, isoform KOR3 and isoform KOR3C are most abundant in hypothalamus and periaqueductal gray. Isoform KOR3A is highly expressed in cortex, striatum and brainstem. Isoform KOR3D is highly expressed in cerebellum, hypothalamus and brainstem. Detected in spleen lymphocytes.

Its subcellular location is the cell membrane. The protein localises to the cytoplasmic vesicle. Its function is as follows. G-protein coupled opioid receptor that functions as a receptor for the endogenous neuropeptide nociceptin. Ligand binding causes a conformation change that triggers signaling via guanine nucleotide-binding proteins (G proteins) and modulates the activity of down-stream effectors. Signaling via G proteins mediates inhibition of adenylate cyclase activity and calcium channel activity. Arrestins modulate signaling via G proteins and mediate the activation of alternative signaling pathways that lead to the activation of MAP kinases. Plays a role in modulating nociception and the perception of pain. Plays a role in the regulation of locomotor activity by the neuropeptide nociceptin. This is Nociceptin receptor (Oprl1) from Mus musculus (Mouse).